Here is a 215-residue protein sequence, read N- to C-terminus: Adenylate kinase (215 aa).

Residue 10 to 15 (GAGKGT) participates in ATP binding. Positions 30 to 59 (STGDMLRAAIKAGTPLGLEAKKIIDEGGLV) are NMP. Residues T31, R36, 57 to 59 (GLV), 85 to 88 (GFPR), and Q92 contribute to the AMP site. Residues 122 to 159 (GRRVHLASGRTYHVTYNPPKVEGKDDVTGEDLIQRDDD) form an LID region. Residues R123 and 132 to 133 (TY) each bind ATP. Positions 156 and 167 each coordinate AMP. An ATP-binding site is contributed by Q200.

Belongs to the adenylate kinase family. In terms of assembly, monomer.

It is found in the cytoplasm. It catalyses the reaction AMP + ATP = 2 ADP. Its pathway is purine metabolism; AMP biosynthesis via salvage pathway; AMP from ADP: step 1/1. Its function is as follows. Catalyzes the reversible transfer of the terminal phosphate group between ATP and AMP. Plays an important role in cellular energy homeostasis and in adenine nucleotide metabolism. This Neisseria meningitidis serogroup C (strain 053442) protein is Adenylate kinase.